The sequence spans 373 residues: Zinc finger CCCH domain-containing protein 15 homolog (373 aa).

A disordered region spans residues 1-27 (MPPKQAQSKKTVEKEKKKKVEDKTFGL). A compositionally biased stretch (basic and acidic residues) spans 10–25 (KTVEKEKKKKVEDKTF). C3H1-type zinc fingers lie at residues 95-123 (DPKS…HDLA) and 167-205 (KPTA…HCLP). Residues 252–326 (KEEKRLQKEK…ALANQINTSL (75 aa)) are a coiled coil. A disordered region spans residues 325 to 373 (SLFTDGGVLPSDDDDDDDDDDDDDEDGDDEEEDDDEEEGEYEEEEASDE). The segment covering 335–373 (SDDDDDDDDDDDDDEDGDDEEEDDDEEEGEYEEEEASDE) has biased composition (acidic residues).

The protein belongs to the ZC3H15/TMA46 family.

This chain is Zinc finger CCCH domain-containing protein 15 homolog, found in Dictyostelium discoideum (Social amoeba).